The sequence spans 347 residues: Hydroxymethylglutaryl-CoA synthase (347 aa).

(3S)-3-hydroxy-3-methylglutaryl-CoA-binding residues include D29 and A30. The Proton donor/acceptor role is filled by E80. Residues C112 and T153 each coordinate (3S)-3-hydroxy-3-methylglutaryl-CoA. C112 acts as the Acyl-thioester intermediate in catalysis. R199 contributes to the CoA binding site. (3S)-3-hydroxy-3-methylglutaryl-CoA-binding residues include T201 and H234. H234 serves as the catalytic Proton donor/acceptor. K239 contributes to the CoA binding site. (3S)-3-hydroxy-3-methylglutaryl-CoA is bound by residues R243, N266, and S296.

Belongs to the thiolase-like superfamily. Archaeal HMG-CoA synthase family. Interacts with acetoacetyl-CoA thiolase that catalyzes the precedent step in the pathway and with a DUF35 protein. The acetoacetyl-CoA thiolase/HMG-CoA synthase complex channels the intermediate via a fused CoA-binding site, which allows for efficient coupling of the endergonic thiolase reaction with the exergonic HMGCS reaction.

The enzyme catalyses acetoacetyl-CoA + acetyl-CoA + H2O = (3S)-3-hydroxy-3-methylglutaryl-CoA + CoA + H(+). Its pathway is metabolic intermediate biosynthesis; (R)-mevalonate biosynthesis; (R)-mevalonate from acetyl-CoA: step 2/3. Its function is as follows. Catalyzes the condensation of acetyl-CoA with acetoacetyl-CoA to form 3-hydroxy-3-methylglutaryl-CoA (HMG-CoA). Functions in the mevalonate (MVA) pathway leading to isopentenyl diphosphate (IPP), a key precursor for the biosynthesis of isoprenoid compounds that are building blocks of archaeal membrane lipids. The protein is Hydroxymethylglutaryl-CoA synthase of Methanocella arvoryzae (strain DSM 22066 / NBRC 105507 / MRE50).